We begin with the raw amino-acid sequence, 267 residues long: Putative transcription factor Ovo-like 1 (267 aa).

4 consecutive C2H2-type zinc fingers follow at residues 118 to 140, 146 to 168, 174 to 197, and 213 to 236; these read FTCHICQKSFTHQRMLNRHMKCH, HLCTYCGKGFNDTFDLKRHVRTH, YKCSLCDKAFTQRCSLESHLKKIH, and YVCEECGCTSESQEGHVLHLKERH.

Expressed in skin, testis, kidney and weakly in lung. Not detected in heart, brain, spleen, liver and skeletal muscle.

It is found in the nucleus. Putative transcription factor. Involved in hair formation and spermatogenesis. May function in the differentiation and/or maintenance of the urogenital system. This is Putative transcription factor Ovo-like 1 (Ovol1) from Mus musculus (Mouse).